The primary structure comprises 137 residues: Ribonuclease VapC3 (137 aa).

A PINc domain is found at 12 to 129; the sequence is VVVDASAMVD…LTTDERLARA (118 aa). Mg(2+)-binding residues include Asp-15 and Asp-105.

Belongs to the PINc/VapC protein family. The cofactor is Mg(2+).

Its function is as follows. Toxic component of a type II toxin-antitoxin (TA) system. An RNase. Its toxic effect is neutralized by coexpression with cognate antitoxin VapB3. This Mycobacterium tuberculosis (strain CDC 1551 / Oshkosh) protein is Ribonuclease VapC3.